A 30-amino-acid polypeptide reads, in one-letter code: Cyclotide psyleio E (30 aa).

Residues 1-30 (SVTPIVCGETCFGGTCNTPGCSCSWPICTK) constitute a cross-link (cyclopeptide (Ser-Lys)). 3 cysteine pairs are disulfide-bonded: Cys-7–Cys-21, Cys-11–Cys-23, and Cys-16–Cys-28.

In terms of processing, this is a cyclic peptide.

Its function is as follows. Probably participates in a plant defense mechanism. This chain is Cyclotide psyleio E, found in Psychotria leiocarpa.